Reading from the N-terminus, the 237-residue chain is MRFSPELEQGRLLVRYKRFLADIETDSGELLTIHCPNTGSMLNCMMPGGRVWFSRSNDPKRKLPGTWEISETPQGRLACINTGRANTLVEEALRAGVIRELEGFTALKREVAYGQEKSRVDFRLEYPDGYLYLEVKSVTLGFADSAVAAFPDAVTQRGARHLRELATLAREGVRAVLLYCVNLTGIEAVRPAKEIDPAYAAALREAVDAGVQILAYGVQLTPEAVYIDRHLEVHWPD.

It belongs to the SfsA family.

The polypeptide is Sugar fermentation stimulation protein homolog (Pseudomonas syringae pv. tomato (strain ATCC BAA-871 / DC3000)).